Consider the following 273-residue polypeptide: Putative phosphoenolpyruvate synthase regulatory protein (273 aa).

153–160 (GVSRSGKT) is a binding site for ADP.

The protein belongs to the pyruvate, phosphate/water dikinase regulatory protein family. PSRP subfamily.

It carries out the reaction [pyruvate, water dikinase] + ADP = [pyruvate, water dikinase]-phosphate + AMP + H(+). The catalysed reaction is [pyruvate, water dikinase]-phosphate + phosphate + H(+) = [pyruvate, water dikinase] + diphosphate. Its function is as follows. Bifunctional serine/threonine kinase and phosphorylase involved in the regulation of the phosphoenolpyruvate synthase (PEPS) by catalyzing its phosphorylation/dephosphorylation. The polypeptide is Putative phosphoenolpyruvate synthase regulatory protein (Polaromonas naphthalenivorans (strain CJ2)).